The primary structure comprises 361 residues: Phospho-N-acetylmuramoyl-pentapeptide-transferase (361 aa).

A run of 10 helical transmembrane segments spans residues 25-45 (RGIL…PAVI), 73-93 (TMGG…WGDL), 98-118 (VWLV…DDWI), 139-159 (IFGL…AAIT), 168-188 (IALP…IVGF), 200-220 (GLAI…AYAS), 237-257 (AGEL…FLWF), 264-284 (VFMG…IAVI), 290-310 (VLVI…IQVV), and 339-359 (VIVR…ATLK).

The protein belongs to the glycosyltransferase 4 family. MraY subfamily. Requires Mg(2+) as cofactor.

Its subcellular location is the cell inner membrane. The catalysed reaction is UDP-N-acetyl-alpha-D-muramoyl-L-alanyl-gamma-D-glutamyl-meso-2,6-diaminopimeloyl-D-alanyl-D-alanine + di-trans,octa-cis-undecaprenyl phosphate = di-trans,octa-cis-undecaprenyl diphospho-N-acetyl-alpha-D-muramoyl-L-alanyl-D-glutamyl-meso-2,6-diaminopimeloyl-D-alanyl-D-alanine + UMP. Its pathway is cell wall biogenesis; peptidoglycan biosynthesis. Functionally, catalyzes the initial step of the lipid cycle reactions in the biosynthesis of the cell wall peptidoglycan: transfers peptidoglycan precursor phospho-MurNAc-pentapeptide from UDP-MurNAc-pentapeptide onto the lipid carrier undecaprenyl phosphate, yielding undecaprenyl-pyrophosphoryl-MurNAc-pentapeptide, known as lipid I. The sequence is that of Phospho-N-acetylmuramoyl-pentapeptide-transferase from Xanthomonas euvesicatoria pv. vesicatoria (strain 85-10) (Xanthomonas campestris pv. vesicatoria).